The primary structure comprises 90 residues: Histone H1.M6.2 (90 aa).

Residues 1 to 90 form a disordered region; that stretch reads MSDAAVPPKK…KAVKKAPKKK (90 aa). A compositionally biased stretch (basic residues) spans 11 to 90; it reads ASPKKAAAKK…KAVKKAPKKK (80 aa).

It is found in the nucleus. It localises to the chromosome. The chain is Histone H1.M6.2 from Trypanosoma cruzi.